The sequence spans 701 residues: T-cell immunomodulatory protein homolog (701 aa).

The N-terminal stretch at 1 to 29 is a signal peptide; that stretch reads MVKCGKYVLILELLLLTLLYNLIKRVSNS. At 30–657 the chain is on the extracellular side; sequence GETVSSFVDG…IQLSVNPSNK (628 aa). N-linked (GlcNAc...) asparagine glycans are attached at residues asparagine 148, asparagine 180, asparagine 217, asparagine 258, asparagine 458, asparagine 522, and asparagine 571. Residues 658–678 form a helical membrane-spanning segment; it reads FYSIIYITLICLSVIGVLIFI. Topologically, residues 679-701 are cytoplasmic; that stretch reads LDRKEKIEDSKEEMGFKSHFVIG.

This sequence belongs to the TIP family.

The protein localises to the membrane. In terms of biological role, may protect the parasite against attack by the host immune system by immunomodulation. The polypeptide is T-cell immunomodulatory protein homolog (Plasmodium yoelii yoelii).